We begin with the raw amino-acid sequence, 201 residues long: Small ribosomal subunit protein uS4c (201 aa).

The segment at leucine 15 to glutamine 43 is disordered. An S4 RNA-binding domain is found at methionine 89 to glutamine 149.

It belongs to the universal ribosomal protein uS4 family. Part of the 30S ribosomal subunit. Contacts protein S5. The interaction surface between S4 and S5 is involved in control of translational fidelity.

Its subcellular location is the plastid. It localises to the chloroplast. Its function is as follows. One of the primary rRNA binding proteins, it binds directly to 16S rRNA where it nucleates assembly of the body of the 30S subunit. With S5 and S12 plays an important role in translational accuracy. The protein is Small ribosomal subunit protein uS4c (rps4) of Nandina domestica (Heavenly bamboo).